Here is a 187-residue protein sequence, read N- to C-terminus: Adenylate kinase (187 aa).

Position 10 to 15 (10 to 15 (GSGKGT)) interacts with ATP. The tract at residues 30–59 (STGDLLRAEVAAGSPLGLKAKEVMARGDLV) is NMP. AMP-binding positions include Thr31, Arg36, 57-59 (DLV), 85-88 (GYPR), and Gln92. The tract at residues 126-136 (GRAKAEGREDD) is LID. Arg127 contacts ATP. 2 residues coordinate AMP: Arg133 and Arg144. Gly172 serves as a coordination point for ATP.

It belongs to the adenylate kinase family. As to quaternary structure, monomer.

The protein resides in the cytoplasm. The catalysed reaction is AMP + ATP = 2 ADP. The protein operates within purine metabolism; AMP biosynthesis via salvage pathway; AMP from ADP: step 1/1. Functionally, catalyzes the reversible transfer of the terminal phosphate group between ATP and AMP. Plays an important role in cellular energy homeostasis and in adenine nucleotide metabolism. The chain is Adenylate kinase from Xanthomonas campestris pv. campestris (strain 8004).